The chain runs to 122 residues: Large ribosomal subunit protein uL18 (122 aa).

The span at 1 to 21 shows a compositional bias: basic residues; it reads MSKLSRKQQTQKRHRRLRRHI. A disordered region spans residues 1-25; it reads MSKLSRKQQTQKRHRRLRRHITGTS.

Belongs to the universal ribosomal protein uL18 family. Part of the 50S ribosomal subunit; part of the 5S rRNA/L5/L18/L25 subcomplex. Contacts the 5S and 23S rRNAs.

In terms of biological role, this is one of the proteins that bind and probably mediate the attachment of the 5S RNA into the large ribosomal subunit, where it forms part of the central protuberance. This is Large ribosomal subunit protein uL18 from Synechococcus sp. (strain CC9902).